The following is a 334-amino-acid chain: Holliday junction branch migration complex subunit RuvB (334 aa).

Positions 1–180 (MSEFLTPERT…FGIILELDFY (180 aa)) are large ATPase domain (RuvB-L). Residues Leu-19, Arg-20, Gly-61, Lys-64, Thr-65, Thr-66, 127 to 129 (EDF), Arg-170, Tyr-180, and Arg-217 each bind ATP. Thr-65 provides a ligand contact to Mg(2+). The tract at residues 181-251 (TVKELKEIIK…IVLKTMEVLN (71 aa)) is small ATPAse domain (RuvB-S). Residues 254 to 334 (AEGLDEFDRK…KYEVPENRLF (81 aa)) form a head domain (RuvB-H) region. DNA-binding residues include Arg-309 and Arg-314.

This sequence belongs to the RuvB family. In terms of assembly, homohexamer. Forms an RuvA(8)-RuvB(12)-Holliday junction (HJ) complex. HJ DNA is sandwiched between 2 RuvA tetramers; dsDNA enters through RuvA and exits via RuvB. An RuvB hexamer assembles on each DNA strand where it exits the tetramer. Each RuvB hexamer is contacted by two RuvA subunits (via domain III) on 2 adjacent RuvB subunits; this complex drives branch migration. In the full resolvosome a probable DNA-RuvA(4)-RuvB(12)-RuvC(2) complex forms which resolves the HJ.

The protein localises to the cytoplasm. It catalyses the reaction ATP + H2O = ADP + phosphate + H(+). Its function is as follows. The RuvA-RuvB-RuvC complex processes Holliday junction (HJ) DNA during genetic recombination and DNA repair, while the RuvA-RuvB complex plays an important role in the rescue of blocked DNA replication forks via replication fork reversal (RFR). RuvA specifically binds to HJ cruciform DNA, conferring on it an open structure. The RuvB hexamer acts as an ATP-dependent pump, pulling dsDNA into and through the RuvAB complex. RuvB forms 2 homohexamers on either side of HJ DNA bound by 1 or 2 RuvA tetramers; 4 subunits per hexamer contact DNA at a time. Coordinated motions by a converter formed by DNA-disengaged RuvB subunits stimulates ATP hydrolysis and nucleotide exchange. Immobilization of the converter enables RuvB to convert the ATP-contained energy into a lever motion, pulling 2 nucleotides of DNA out of the RuvA tetramer per ATP hydrolyzed, thus driving DNA branch migration. The RuvB motors rotate together with the DNA substrate, which together with the progressing nucleotide cycle form the mechanistic basis for DNA recombination by continuous HJ branch migration. Branch migration allows RuvC to scan DNA until it finds its consensus sequence, where it cleaves and resolves cruciform DNA. The chain is Holliday junction branch migration complex subunit RuvB from Thermotoga petrophila (strain ATCC BAA-488 / DSM 13995 / JCM 10881 / RKU-1).